The following is a 158-amino-acid chain: Cytochrome c-type biogenesis protein CcmE (158 aa).

Over 1–8 (MNIRRRRR) the chain is Cytoplasmic. Residues 9–29 (LLVVVAILVGLGLATGLVMYA) traverse the membrane as a helical; Signal-anchor for type II membrane protein segment. At 30 to 158 (LRSNIDLFYT…GLLNVSEPTR (129 aa)) the chain is on the periplasmic side. His-130 and Tyr-134 together coordinate heme.

It belongs to the CcmE/CycJ family.

The protein localises to the cell inner membrane. Functionally, heme chaperone required for the biogenesis of c-type cytochromes. Transiently binds heme delivered by CcmC and transfers the heme to apo-cytochromes in a process facilitated by CcmF and CcmH. In Tatumella citrea (Pantoea citrea), this protein is Cytochrome c-type biogenesis protein CcmE.